A 215-amino-acid polypeptide reads, in one-letter code: Adenylate kinase (215 aa).

Residue 10–15 coordinates ATP; it reads GAGKGT. The NMP stretch occupies residues 30–59; the sequence is STGDIFRANISGKTELGMKAKGYMDKGLLV. AMP is bound by residues T31, R36, 57–59, 85–88, and Q92; these read LLV and GFPR. Positions 126–163 are LID; sequence GRRVCSKCGASYHIEYNPTKVEGICDLCGSPVVQRKDD. R127 contacts ATP. Positions 130 and 133 each coordinate Zn(2+). 136-137 is a binding site for ATP; that stretch reads SY. Zn(2+) is bound by residues C150 and C153. 2 residues coordinate AMP: R160 and R171. Residue Q199 participates in ATP binding.

This sequence belongs to the adenylate kinase family. As to quaternary structure, monomer.

The protein localises to the cytoplasm. The enzyme catalyses AMP + ATP = 2 ADP. Its pathway is purine metabolism; AMP biosynthesis via salvage pathway; AMP from ADP: step 1/1. Functionally, catalyzes the reversible transfer of the terminal phosphate group between ATP and AMP. Plays an important role in cellular energy homeostasis and in adenine nucleotide metabolism. The sequence is that of Adenylate kinase from Clostridium acetobutylicum (strain ATCC 824 / DSM 792 / JCM 1419 / IAM 19013 / LMG 5710 / NBRC 13948 / NRRL B-527 / VKM B-1787 / 2291 / W).